We begin with the raw amino-acid sequence, 264 residues long: Signal peptidase I (264 aa).

At 1–18 (MNRDNTKTNKTVKQEFAS) the chain is on the cytoplasmic side. A helical membrane pass occupies residues 19-39 (FTFVICIALVIRILIMEPFTV). Residues 40 to 264 (PTGSMKATIL…IFKNLYNVDE (225 aa)) lie on the Periplasmic side of the membrane. Active-site residues include Ser43 and Lys106.

It belongs to the peptidase S26 family.

The protein localises to the cell inner membrane. The catalysed reaction is Cleavage of hydrophobic, N-terminal signal or leader sequences from secreted and periplasmic proteins.. In terms of biological role, complements E.coli mutants temperature-sensitive for LepB function. The protein is Signal peptidase I (lepB) of Rickettsia typhi (strain ATCC VR-144 / Wilmington).